The sequence spans 193 residues: MSRYVEKVRETKETKVQVKLELDGEGKVEIRTPVPFFDHMLHSMLFYMKVNATILGEDKQGYDDHHIVEDVGITLGQAIKDALGDRRGIKRFSSAVIPMDEALVLVAVDVSGRGYASTNLDLKREKIGDLSTENVAHFFWSLATNAGITLHVRKLDGVNEHHIVEAAFKGVGLALGEACSIQGEGIRSTKGSL.

The protein belongs to the imidazoleglycerol-phosphate dehydratase family.

It is found in the cytoplasm. It carries out the reaction D-erythro-1-(imidazol-4-yl)glycerol 3-phosphate = 3-(imidazol-4-yl)-2-oxopropyl phosphate + H2O. It functions in the pathway amino-acid biosynthesis; L-histidine biosynthesis; L-histidine from 5-phospho-alpha-D-ribose 1-diphosphate: step 6/9. The chain is Imidazoleglycerol-phosphate dehydratase from Metallosphaera sedula (strain ATCC 51363 / DSM 5348 / JCM 9185 / NBRC 15509 / TH2).